We begin with the raw amino-acid sequence, 42 residues long: Photosystem II reaction center protein J (42 aa).

Residues 10-30 (IPLWLIATVAGILVLTVVGIF) form a helical membrane-spanning segment.

Belongs to the PsbJ family. In terms of assembly, PSII is composed of 1 copy each of membrane proteins PsbA, PsbB, PsbC, PsbD, PsbE, PsbF, PsbH, PsbI, PsbJ, PsbK, PsbL, PsbM, PsbT, PsbX, PsbY, PsbZ, Psb30/Ycf12, at least 3 peripheral proteins of the oxygen-evolving complex and a large number of cofactors. It forms dimeric complexes.

It localises to the plastid. Its subcellular location is the chloroplast thylakoid membrane. In terms of biological role, one of the components of the core complex of photosystem II (PSII). PSII is a light-driven water:plastoquinone oxidoreductase that uses light energy to abstract electrons from H(2)O, generating O(2) and a proton gradient subsequently used for ATP formation. It consists of a core antenna complex that captures photons, and an electron transfer chain that converts photonic excitation into a charge separation. This Chara vulgaris (Common stonewort) protein is Photosystem II reaction center protein J.